A 276-amino-acid polypeptide reads, in one-letter code: ATP synthase subunit a (276 aa).

7 helical membrane passes run 49 to 69 (KPML…FAAA), 109 to 129 (YLFT…IPFI), 137 to 157 (SGMV…AGIS), 173 to 193 (GIRG…NILV), 203 to 223 (FANM…GEYI), 232 to 252 (APVG…EMLI), and 253 to 273 (QFLQ…GAVA).

It belongs to the ATPase A chain family. As to quaternary structure, F-type ATPases have 2 components, CF(1) - the catalytic core - and CF(0) - the membrane proton channel. CF(1) has five subunits: alpha(3), beta(3), gamma(1), delta(1), epsilon(1). CF(0) has three main subunits: a(1), b(2) and c(9-12). The alpha and beta chains form an alternating ring which encloses part of the gamma chain. CF(1) is attached to CF(0) by a central stalk formed by the gamma and epsilon chains, while a peripheral stalk is formed by the delta and b chains.

The protein localises to the cell membrane. Functionally, key component of the proton channel; it plays a direct role in the translocation of protons across the membrane. The sequence is that of ATP synthase subunit a from Nocardioides sp. (strain ATCC BAA-499 / JS614).